Reading from the N-terminus, the 97-residue chain is Serine protease inhibitor Kazal-type 13 (97 aa).

A signal peptide spans 1–26; it reads MKRSGCWHQRMLLSLVLLTWTHVTFS. N-linked (GlcNAc...) asparagine glycosylation is present at asparagine 33. Residues 36–97 enclose the Kazal-like domain; it reads RWPKPPCKMY…IQFVKYGKCE (62 aa). 3 disulfide bridges follow: cysteine 42-cysteine 78, cysteine 56-cysteine 75, and cysteine 64-cysteine 96.

It is found in the secreted. In terms of biological role, may be a serine protease inhibitor. Essential for sperm maturation and fertility. Inhibits sperm acrosome reaction, protecting sperm from premature reaction. This is Serine protease inhibitor Kazal-type 13 (Spink13) from Mus musculus (Mouse).